The following is a 764-amino-acid chain: Thyrotropin receptor (764 aa).

A signal peptide spans 1–21 (MSLTPLLQLALLLALPRSLRG). Topologically, residues 22 to 413 (KGCPSPPCEC…EFNPCEDIMG (392 aa)) are extracellular. The cysteines at positions 31 and 41 are disulfide-linked. 2 N-linked (GlcNAc...) asparagine glycosylation sites follow: N77 and N99. LRR repeat units follow at residues 125-150 (LPLLKFLGIFNTGLRIFPDLTKVYST), 151-174 (DVFFILEITDNPYMTSIPANAFQG), 176-199 (CNETLTLKLYNNGFTSVQGHAFNG), 201-223 (KLDAVYLNKNKYLTVIDKDAFGG), 225-248 (FSGPTLLDVSYTSVTALPPKGLEH), and 250-271 (KELIARNTWTLKKLPLSLSFLH). N-linked (GlcNAc...) asparagine glycosylation is found at N177 and N198. A glycan (N-linked (GlcNAc...) asparagine) is linked at N302. Sulfotyrosine is present on Y385. A helical membrane pass occupies residues 414-441 (YRFLRIVVWFVSLLALLGNVFVLVILLT). Over 442-450 (SHYKLTVPR) the chain is Cytoplasmic. A helical transmembrane segment spans residues 451–473 (FLMCNLAFADFCMGMYLLLIASV). Residues 474–494 (DLYTQSEYYNHAIDWQTGPGC) lie on the Extracellular side of the membrane. C494 and C569 are disulfide-bonded. Residues 495–517 (NTAGFFTVFASELSVYTLTVITL) traverse the membrane as a helical segment. The Cytoplasmic segment spans residues 518–537 (ERWYAITFAMRLDRKIRLRH). The helical transmembrane segment at 538–560 (AYAIMAGGWVCCFLLALLPLVGI) threads the bilayer. At 561 to 580 (SSYAKVSICLPMDTETPLAL) the chain is on the extracellular side. The helical transmembrane segment at 581–602 (AYIILVLLLNIVAFTIVCSCYV) threads the bilayer. The Cytoplasmic portion of the chain corresponds to 603 to 625 (KIYITVRNPQYNPGDKDTKIAKR). The helical transmembrane segment at 626 to 649 (MAVLIFTDFMCMAPISFYALSALM) threads the bilayer. Over 650 to 660 (NKPLITVTNSK) the chain is Extracellular. The helical transmembrane segment at 661 to 682 (ILLVLFYPLNSCANPFLYAIFT) threads the bilayer. The Cytoplasmic portion of the chain corresponds to 683-764 (KAFQRDVFIL…ISKEYKQPVL (82 aa)). The PDZ-binding motif lies at 762–764 (PVL).

It belongs to the G-protein coupled receptor 1 family. FSH/LSH/TSH subfamily. Interacts with heterodimer GPHA2:GPHB5; this interaction stimulates cAMP production. Interacts (via the PDZ-binding motif) with SCRIB; regulates TSHR trafficking and function. Glycosylated. In terms of processing, sulfated. Sulfation on Tyr-385 plays a role in thyrotropin receptor binding and activation. In terms of tissue distribution, expressed in thyroide cells (at protein level).

It is found in the cell membrane. It localises to the basolateral cell membrane. In terms of biological role, receptor for the thyroid-stimulating hormone (TSH) or thyrotropin. Also acts as a receptor for the heterodimeric glycoprotein hormone (GPHA2:GPHB5) or thyrostimulin. The activity of this receptor is mediated by G proteins which activate adenylate cyclase. Plays a central role in controlling thyroid cell metabolism. The polypeptide is Thyrotropin receptor (TSHR) (Sus scrofa (Pig)).